We begin with the raw amino-acid sequence, 101 residues long: uncharacterized protein (101 aa).

A signal peptide spans 1–23; that stretch reads MERRTGVVLIIFVTFCEAMMARA. Residues 38-58 traverse the membrane as a helical segment; sequence FLLFIIHTSCTMVAFIIGNLA.

It is found in the host membrane. This is an uncharacterized protein from Cryphonectria parasitica (Chestnut blight fungus).